The primary structure comprises 493 residues: NADH-ubiquinone oxidoreductase 51 kDa subunit, mitochondrial (493 aa).

A mitochondrion-targeting transit peptide spans 1–27; it reads MLSRTAAPTKASARTLSRAAAEQCRTF. 96 to 105 lines the NAD(+) pocket; it reads GRGGAGFPSG. An FMN-binding site is contributed by 212 to 259; the sequence is GAGAYVCGEETSLIESLEGKPGKPRLKPPFPAAVGLFGCPSTVANVET. Residues Cys-391, Cys-394, Cys-397, and Cys-437 each contribute to the [4Fe-4S] cluster site.

The protein belongs to the complex I 51 kDa subunit family. Complex I is composed of about 40 different subunits. This is a component of the flavoprotein-sulfur (FP) fragment of the enzyme. It depends on FMN as a cofactor. [4Fe-4S] cluster is required as a cofactor.

The protein resides in the mitochondrion inner membrane. The catalysed reaction is a ubiquinone + NADH + 5 H(+)(in) = a ubiquinol + NAD(+) + 4 H(+)(out). In terms of biological role, core subunit of the mitochondrial membrane respiratory chain NADH dehydrogenase (Complex I) that is believed to belong to the minimal assembly required for catalysis. Complex I functions in the transfer of electrons from NADH to the respiratory chain. The immediate electron acceptor for the enzyme is believed to be ubiquinone. The chain is NADH-ubiquinone oxidoreductase 51 kDa subunit, mitochondrial (nuo-51) from Neurospora crassa (strain ATCC 24698 / 74-OR23-1A / CBS 708.71 / DSM 1257 / FGSC 987).